Reading from the N-terminus, the 20-residue chain is Zinc metalloproteinase-disintegrin-like uracoina-1 (20 aa).

Belongs to the venom metalloproteinase (M12B) family. P-III subfamily. In terms of assembly, monomer. Zn(2+) is required as a cofactor. Expressed by the venom gland.

It localises to the secreted. With respect to regulation, inhibited by ethylenediaminetetraacetic acid (EDTA) and 1,10-phenanthroline. Not inhibited by tosyl-L-lysine chloromethyl ketone (TCLK) and phenylmethanesulfonylfluoride (PMSF). Snake venom zinc metalloprotease that possesses hemorrhagic activity (minimum hemorrhagic dose, MHD=4.7 ug) when injected intradermally into mice. Degrades the alpha-chain of fibrinogen (FGA). The polypeptide is Zinc metalloproteinase-disintegrin-like uracoina-1 (Crotalus vegrandis (Uracoan rattlesnake)).